The following is a 156-amino-acid chain: MADHHRGATGGGGGYGDLQRGGGMHGEAQQQQKQGAMMTALKAATAATFGGSMLVLSGLILAGTVIALTVATPVLVIFSPVLVPAAIALALMAAGFVTSGGLGVAALSVFSWMYKYLTGKHPPAADQLDHAKARLASKARDVKDAAQHRIDQAQGS.

Residues 1 to 30 (MADHHRGATGGGGGYGDLQRGGGMHGEAQQ) are disordered. Position 2 is an N-acetylalanine (A2). The interval 2 to 42 (ADHHRGATGGGGGYGDLQRGGGMHGEAQQQQKQGAMMTALK) is polar. Over residues 8–25 (ATGGGGGYGDLQRGGGMH) the composition is skewed to gly residues. The segment at 43 to 114 (AATAATFGGS…AALSVFSWMY (72 aa)) is hydrophobic. 2 helical membrane passes run 51–71 (GSML…LTVA) and 95–115 (GFVT…WMYK).

Belongs to the oleosin family. The N-terminus is blocked.

The protein resides in the lipid droplet. It localises to the membrane. In terms of biological role, may have a structural role to stabilize the lipid body during desiccation of the seed by preventing coalescence of the oil. Probably interacts with both lipid and phospholipid moieties of lipid bodies. May also provide recognition signals for specific lipase anchorage in lipolysis during seedling growth. The protein is Oleosin Zm-I (OLE16) of Zea mays (Maize).